The following is a 249-amino-acid chain: Probable transcriptional regulatory protein Sfum_0996 (249 aa).

This sequence belongs to the TACO1 family.

The protein localises to the cytoplasm. The polypeptide is Probable transcriptional regulatory protein Sfum_0996 (Syntrophobacter fumaroxidans (strain DSM 10017 / MPOB)).